We begin with the raw amino-acid sequence, 842 residues long: Oligopeptide transporter phomP2' (842 aa).

Positions 1–58 (MEADPKVPFTDEMNIQDEHNWESGSWSSSRRSNDSNVTLLSRRSSVEQHEDERQKDSD) are disordered. The segment covering 23–36 (SGSWSSSRRSNDSN) has biased composition (low complexity). N33 and N36 each carry an N-linked (GlcNAc...) asparagine glycan. Over residues 44 to 58 (SSVEQHEDERQKDSD) the composition is skewed to basic and acidic residues. 6 consecutive transmembrane segments (helical) span residues 105–125 (VWLL…VYYF), 177–197 (ALVV…GPLS), 210–230 (PWAI…VGLY), 268–288 (VFMA…FVFP), 315–335 (GFGL…SPLF), and 345–365 (FVGA…SDAL). N-linked (GlcNAc...) asparagine glycans are attached at residues N386 and N398. 4 helical membrane passes run 415–435 (AMHF…AVLF), 478–498 (AWYA…LYAG), 505–525 (WGLQ…GMLF), and 585–605 (WELL…NWAV). The span at 629–649 (QGLGLGQGGGGGGGGGGGGGQ) shows a compositional bias: gly residues. Residues 629–657 (QGLGLGQGGGGGGGGGGGGGQQQRAAGAH) are disordered. 3 helical membrane passes run 668–688 (NFFS…FGGG), 700–720 (WLLP…WLIH), and 731–751 (WPLH…FPTT). N752 is a glycosylation site (N-linked (GlcNAc...) asparagine). A helical membrane pass occupies residues 784 to 804 (AGLDCGAQLVQMVLGLAFLVF).

This sequence belongs to the oligopeptide OPT transporter family.

It is found in the membrane. In terms of biological role, oligopeptide transporter; part of the gene cluster that mediates the biosynthesis of the phomopsins, a group of hexapeptide mycotoxins which infects lupins and causes lupinosis disease in livestock. The protein is Oligopeptide transporter phomP2' of Diaporthe leptostromiformis (Lupinosis disease fungus).